The chain runs to 380 residues: Cobalt-precorrin-5B C(1)-methyltransferase (380 aa).

This sequence belongs to the CbiD family.

The enzyme catalyses Co-precorrin-5B + S-adenosyl-L-methionine = Co-precorrin-6A + S-adenosyl-L-homocysteine. The protein operates within cofactor biosynthesis; adenosylcobalamin biosynthesis; cob(II)yrinate a,c-diamide from sirohydrochlorin (anaerobic route): step 6/10. Its function is as follows. Catalyzes the methylation of C-1 in cobalt-precorrin-5B to form cobalt-precorrin-6A. The polypeptide is Cobalt-precorrin-5B C(1)-methyltransferase (Salinispora arenicola (strain CNS-205)).